The following is a 223-amino-acid chain: GTP cyclohydrolase 1 (223 aa).

Residues C114, H117, and C185 each coordinate Zn(2+).

Belongs to the GTP cyclohydrolase I family. As to quaternary structure, homomer.

The catalysed reaction is GTP + H2O = 7,8-dihydroneopterin 3'-triphosphate + formate + H(+). The protein operates within cofactor biosynthesis; 7,8-dihydroneopterin triphosphate biosynthesis; 7,8-dihydroneopterin triphosphate from GTP: step 1/1. The sequence is that of GTP cyclohydrolase 1 from Chlorobium phaeovibrioides (strain DSM 265 / 1930) (Prosthecochloris vibrioformis (strain DSM 265)).